Consider the following 320-residue polypeptide: Sucrose operon repressor (320 aa).

The HTH lacI-type domain occupies 1–57; it reads MVAKLTDVAKLAGVSPTTVSRVINRKGYLSEKTITKVQAAMKTLGYKPNNLARSLQG. Positions 5–24 form a DNA-binding region, H-T-H motif; that stretch reads LTDVAKLAGVSPTTVSRVIN.

Its function is as follows. Negative regulator of scrB expression. The polypeptide is Sucrose operon repressor (scrR) (Streptococcus mutans serotype c (strain ATCC 700610 / UA159)).